The sequence spans 123 residues: WAP four-disulfide core domain protein 2 (123 aa).

Residues methionine 1–glycine 28 form the signal peptide. 2 WAP domains span residues glycine 30–cysteine 71 and proline 74–asparagine 122. 8 disulfides stabilise this stretch: cysteine 37-cysteine 63, cysteine 46-cysteine 67, cysteine 50-cysteine 62, cysteine 56-cysteine 71, cysteine 81-cysteine 109, cysteine 92-cysteine 113, cysteine 96-cysteine 108, and cysteine 102-cysteine 118. The N-linked (GlcNAc...) asparagine glycan is linked to asparagine 45.

In terms of assembly, homotrimer; disulfide-linked. Epididymis.

The protein resides in the secreted. Broad range protease inhibitor. This is WAP four-disulfide core domain protein 2 (WFDC2) from Oryctolagus cuniculus (Rabbit).